The following is a 337-amino-acid chain: ATP-dependent 6-phosphofructokinase (337 aa).

G11 serves as a coordination point for ATP. 21–25 contacts ADP; that stretch reads RAVVR. Residues 72–73 and 102–105 contribute to the ATP site; these read RY and GDGS. Mg(2+) is bound at residue D103. 125–127 lines the substrate pocket; sequence TID. The active-site Proton acceptor is the D127. R154 is an ADP binding site. Residues R162 and 169–171 contribute to the substrate site; that span reads MGR. Residues 185–187 and 214–216 each bind ADP; these read GAD and KNH. Substrate-binding positions include E223, R245, and 251 to 254; that span reads HILR.

The protein belongs to the phosphofructokinase type A (PFKA) family. ATP-dependent PFK group I subfamily. Prokaryotic clade 'B1' sub-subfamily. Homotetramer. Requires Mg(2+) as cofactor.

It is found in the cytoplasm. It catalyses the reaction beta-D-fructose 6-phosphate + ATP = beta-D-fructose 1,6-bisphosphate + ADP + H(+). The protein operates within carbohydrate degradation; glycolysis; D-glyceraldehyde 3-phosphate and glycerone phosphate from D-glucose: step 3/4. With respect to regulation, allosterically activated by ADP and other diphosphonucleosides, and allosterically inhibited by phosphoenolpyruvate. Catalyzes the phosphorylation of D-fructose 6-phosphate to fructose 1,6-bisphosphate by ATP, the first committing step of glycolysis. The protein is ATP-dependent 6-phosphofructokinase of Streptococcus mutans serotype c (strain ATCC 700610 / UA159).